Reading from the N-terminus, the 119-residue chain is Probable non-functional T cell receptor gamma variable 10 (119 aa).

The first 19 residues, 1–19 (MSLLEAFAFSSWALGLGLS), serve as a signal peptide directing secretion. The Ig-like domain occupies 24–119 (FQLSISTEVK…MAVYYCAAWD (96 aa)). Cysteines 40 and 115 form a disulfide.

In terms of assembly, gamma-delta TR is a heterodimer composed of a gamma and delta chain; disulfide-linked. The gamma-delta TR is associated with the transmembrane signaling CD3 coreceptor proteins following the stoichiometry: a single gamma-delta TR heterodimer associates with one CD3D-CD3E heterodimer, one CD3G-CD3E heterodimer and one CD247 homodimer forming a stable octameric structure. Upon activation, gamma-delta TR complex associates with FCER1G to initiate intracellular signaling.

Its subcellular location is the cell membrane. Functionally, probable non-functional open reading frame (ORF) of V region of the variable domain of T cell receptor (TR) gamma chain. Non-functional ORF generally cannot participate in the synthesis of a productive T cell receptor (TR) chain due to altered V-(D)-J or switch recombination and/or splicing site (at mRNA level) and/or conserved amino acid change (protein level). Gamma-delta TRs recognize a variety of self and foreign non-peptide antigens frequently expressed at the epithelial boundaries between the host and external environment, including endogenous lipids presented by MH-like protein CD1D and phosphoantigens presented by butyrophilin-like molecule BTN3A1. Upon antigen recognition induces rapid, innate-like immune responses involved in pathogen clearance and tissue repair. Binding of gamma-delta TR complex to antigen triggers phosphorylation of immunoreceptor tyrosine-based activation motifs (ITAMs) in the CD3 chains by the LCK and FYN kinases, allowing the recruitment, phosphorylation, and activation of ZAP70 that facilitates phosphorylation of the scaffolding proteins LCP2 and LAT. This lead to the formation of a supramolecular signalosome that recruits the phospholipase PLCG1, resulting in calcium mobilization and ERK activation, ultimately leading to T cell expansion and differentiation into effector cells. Gamma-delta TRs are produced through somatic rearrangement of a limited repertoire of variable (V), diversity (D), and joining (J) genes. The potential diversity of gamma-delta TRs is conferred by the unique ability to rearrange (D) genes in tandem and to utilize all three reading frames. The combinatorial diversity is considerably increased by the sequence exonuclease trimming and random nucleotide (N) region additions which occur during the V-(D)-J rearrangements. In Homo sapiens (Human), this protein is Probable non-functional T cell receptor gamma variable 10.